A 379-amino-acid chain; its full sequence is Protein hairy (379 aa).

Residues 20–50 (STQQQQQQQQHKEAPIKSDRRSNKPIMEKRR) form a disordered region. Residues 29 to 47 (QHKEAPIKSDRRSNKPIME) show a composition bias toward basic and acidic residues. Residues 36-55 (KSDRRSNKPIMEKRRRARIN) are interaction with Topors. In terms of domain architecture, bHLH spans 38–95 (DRRSNKPIMEKRRRARINNCLNELKTLILDATKKDPARHSKLEKADILEKTVKHLQEL). One can recognise an Orange domain in the interval 114-143 (FKAGFADCANEVSRFPGLDSTQRRRLLQHL). Disordered stretches follow at residues 167–208 (QSLH…NTTA) and 298–345 (QRTA…VKPS). 2 stretches are compositionally biased toward low complexity: residues 182–207 (PEQE…TNTT) and 301–328 (ASTG…GSYA). The short motif at 376–379 (WRPW) is the WRPW motif element.

Transcription repression requires formation of a complex with a corepressor protein (Groucho).

The protein localises to the nucleus. In terms of biological role, pair-rule protein that regulates embryonic segmentation and adult bristle patterning. Transcriptional repressor of genes that require a bHLH protein for their transcription (e.g. ftz). In Drosophila virilis (Fruit fly), this protein is Protein hairy.